Consider the following 260-residue polypeptide: Triosephosphate isomerase (260 aa).

11 to 13 (NWK) contacts substrate. Residue H103 is the Electrophile of the active site. E175 functions as the Proton acceptor in the catalytic mechanism. Residues G181, S220, and 241 to 242 (GG) each bind substrate.

Belongs to the triosephosphate isomerase family. As to quaternary structure, homodimer.

It is found in the cytoplasm. The enzyme catalyses D-glyceraldehyde 3-phosphate = dihydroxyacetone phosphate. It participates in carbohydrate biosynthesis; gluconeogenesis. It functions in the pathway carbohydrate degradation; glycolysis; D-glyceraldehyde 3-phosphate from glycerone phosphate: step 1/1. Involved in the gluconeogenesis. Catalyzes stereospecifically the conversion of dihydroxyacetone phosphate (DHAP) to D-glyceraldehyde-3-phosphate (G3P). The polypeptide is Triosephosphate isomerase (Shewanella piezotolerans (strain WP3 / JCM 13877)).